Here is a 348-residue protein sequence, read N- to C-terminus: Serpentine receptor class beta-7 (348 aa).

A run of 7 helical transmembrane segments spans residues 31 to 51 (QLIMLFSSLFPLTYFILFQLL), 63 to 83 (LVGYFGAILVFSVVFLVEAFI), 107 to 127 (GNLLGCLLMTIPTFFPISITF), 145 to 165 (FLGPILAIFLVLLDLFLILLI), 191 to 211 (MFFIMMLILNSFNFFFSFLLL), 241 to 261 (ISVIFVHVTFFGSYTTITILL), and 280 to 300 (GAFMTMISSYNFAVGVASVYF).

This sequence belongs to the nematode receptor-like protein srb family.

Its subcellular location is the membrane. The protein is Serpentine receptor class beta-7 (srb-7) of Caenorhabditis elegans.